A 196-amino-acid chain; its full sequence is Small ribosomal subunit protein uS4c (196 aa).

Residues 89-150 (MRLDNIVFRL…NQRSKRLVQN (62 aa)) form the S4 RNA-binding domain.

It belongs to the universal ribosomal protein uS4 family. In terms of assembly, part of the 30S ribosomal subunit. Contacts protein S5. The interaction surface between S4 and S5 is involved in control of translational fidelity.

Its subcellular location is the plastid. The protein localises to the chloroplast. One of the primary rRNA binding proteins, it binds directly to 16S rRNA where it nucleates assembly of the body of the 30S subunit. Its function is as follows. With S5 and S12 plays an important role in translational accuracy. This is Small ribosomal subunit protein uS4c (rps4) from Eleusine indica (Goosegrass).